The sequence spans 436 residues: Methyl-accepting chemotaxis protein Amb0994 (436 aa).

The Cytoplasmic portion of the chain corresponds to 1 to 8; that stretch reads METTLGSY. Residues 9-29 form a helical membrane-spanning segment; it reads ARTLSLGMLVPSAICLLAGTF. Gly30 is a topological domain (periplasmic). Residues 31–51 traverse the membrane as a helical segment; sequence LLGGSSIALWVVIAVSLLGVV. The Cytoplasmic segment spans residues 52–436; sequence GGVKIGGSAR…DGFIARIGGR (385 aa). The 237-residue stretch at 180 to 416 folds into the Methyl-accepting transducer domain; it reads AATELEASSG…QVADAASELS (237 aa). Gln211 carries the post-translational modification Glutamate methyl ester (Gln). A Glutamate methyl ester (Glu) modification is found at Glu225. The required for interaction with MamK and to respond to the magnetic field stretch occupies residues 321–436; that stretch reads TEDITSQVAH…DGFIARIGGR (116 aa).

The protein belongs to the methyl-accepting chemotaxis (MCP) protein family. In terms of assembly, interacts with MamK at cell poles and septa.

Its subcellular location is the cell inner membrane. Functionally, probable methyl-accepting taxis protein. May be the receptor that senses the torque generated from the interaction between the magnetosome dipole moment and the external magnetic field. Overproduction interferes with magnetotaxis, cells respond more slowly to changes in the magnetic field; requires the MamK-interacting C-terminus of the protein. The effect of magnetic sensing is to control flagellar rotation. In terms of biological role, chemotactic-signal transducers respond to changes in the concentration of attractants and repellents in the environment, transduce a signal from the outside to the inside of the cell, and facilitate sensory adaptation through variation of methylation levels. Attractants increase the level of methylation while repellents decrease the level of methylation. This chain is Methyl-accepting chemotaxis protein Amb0994, found in Paramagnetospirillum magneticum (strain ATCC 700264 / AMB-1) (Magnetospirillum magneticum).